Consider the following 397-residue polypeptide: tRNA (guanine-N(7)-)-methyltransferase non-catalytic subunit wuho (397 aa).

4 WD repeats span residues 75–115 (KVEV…AQLL), 163–202 (GHLS…DIHS), 206–244 (GHKE…ELLL), and 303–343 (AGTW…RASG).

It belongs to the WD repeat TRM82 family. As to quaternary structure, forms a heterodimer with the catalytic subunit Mettl1. Interacts with mei-P26 and weakly interacts with bgcn; required for the function or formation of the mei-P26-bgcn-bam-sxl complex. Interacts with nanos; may be involved in mei-P26-dependent derepression of the BMP signaling pathway. Interacts with Myc; the interaction may be mediated by mei-P26 and may be involved in the regulation of ribosome biogenesis. In terms of tissue distribution, in testis, it is present at high level in hub cells, a niche for germline stem cells of testis. Ubiquitously expressed in all testicular cells throughout spermatogenesis. Ubiquitously expressed in all germline and somatic cells of the ovary.

The protein localises to the nucleus. It is found in the cytoplasm. It participates in tRNA modification; N(7)-methylguanine-tRNA biosynthesis. Functionally, required for the Mettl1-dependent formation of N(7)-methylguanine at position 46 (m7G46) in tRNA. In the Mettl1-wuho methyltransferase complex, it is required to stabilize and induce conformational changes of the catalytic subunit. Required for binding of nanos mRNA and repression of translation by the mei-P26-bgcn-bam-sxl complex. May cooperate with mei-P26 and nanos to derepress the BMP signaling pathway. May cooperate with mei-P26 to suppress expression of a subset of microRNAs. May cooperate with mei-P26 to regulate bam expression levels in germline cells during gametogenesis. Required to promote mitosis to meiosis transition during gametogenesis. May regulate germline cell division in part by regulating ribosome biogenesis. The protein is tRNA (guanine-N(7)-)-methyltransferase non-catalytic subunit wuho of Drosophila persimilis (Fruit fly).